The chain runs to 72 residues: uncharacterized protein (72 aa).

The chain crosses the membrane as a helical span at residues Ile23–Phe45.

The protein resides in the membrane. This is an uncharacterized protein from Schizosaccharomyces pombe (strain 972 / ATCC 24843) (Fission yeast).